A 504-amino-acid polypeptide reads, in one-letter code: Anaerobic nitric oxide reductase transcription regulator NorR (504 aa).

4-aspartylphosphate is present on aspartate 57. The region spanning 187–416 (MIGLSPGMTQ…LEHAIHRAVV (230 aa)) is the Sigma-54 factor interaction domain. Residues 215–222 (GETGTGKE) and 278–287 (ADNGTLFLDE) contribute to the ATP site. The segment at residues 479-498 (WAACARMLETDVANLHRLAK) is a DNA-binding region (H-T-H motif).

It participates in nitrogen metabolism; nitric oxide reduction. Required for the expression of anaerobic nitric oxide (NO) reductase, acts as a transcriptional activator for at least the norVW operon. Activation also requires sigma-54. The sequence is that of Anaerobic nitric oxide reductase transcription regulator NorR from Escherichia coli O81 (strain ED1a).